The sequence spans 44 residues: Conotoxin S5.1 (44 aa).

Post-translationally, contains 3 disulfide bonds. As to expression, expressed by the venom duct.

The protein resides in the secreted. This is Conotoxin S5.1 from Conus striatus (Striated cone).